The following is a 329-amino-acid chain: MFSLSFIVIAVIIVVALLILFSFVPIGLWISALAAGVHVGIGTLVGMRLRRVSPRKVIAPLIKAHKAGLALTTNQLESHYLAGGNVDRVVDANIAAQRADIDLPFERAAAIDLAGRDVLEAVQMSVNPKVIETPFIAGVAMNGIEVKAKARITVRANIARLVGGAGEETIIARVGEGIVSTIGSSKHHTEVLENPDNISKTVLSKGLDSGTAFEILSIDIADVDISKNIGADLQTEQALADKNIAQAKAEERRAMAVATEQEMKARVQEMHAKVVEAESEVPLAMAEALRSGNISVKDYYNLKNIEADTGMRNAINKRTDQSDDESPEH.

Helical transmembrane passes span 6-26 (FIVI…FVPI) and 27-47 (GLWI…LVGM).

This sequence belongs to the flotillin-like FloA family. In terms of assembly, homooligomerizes.

It is found in the cell membrane. It localises to the membrane raft. Functionally, found in functional membrane microdomains (FMM) that may be equivalent to eukaryotic membrane rafts. FMMs are highly dynamic and increase in number as cells age. Flotillins are thought to be important factors in membrane fluidity. In Staphylococcus aureus (strain USA300), this protein is Flotillin-like protein FloA.